The primary structure comprises 155 residues: Xanthine-guanine phosphoribosyltransferase 2 (155 aa).

5-phospho-alpha-D-ribose 1-diphosphate contacts are provided by residues 37–38 (RG) and 91–99 (DDLVDTGNT). Residue Asp-92 coordinates Mg(2+). Residues Asp-95 and Ile-138 each contribute to the guanine site. Residues Asp-95 and Ile-138 each contribute to the xanthine site. GMP-binding positions include 95 to 99 (DTGNT) and 137 to 138 (WI).

It belongs to the purine/pyrimidine phosphoribosyltransferase family. XGPT subfamily. As to quaternary structure, homotetramer. Mg(2+) is required as a cofactor.

It is found in the cell inner membrane. It carries out the reaction GMP + diphosphate = guanine + 5-phospho-alpha-D-ribose 1-diphosphate. The catalysed reaction is XMP + diphosphate = xanthine + 5-phospho-alpha-D-ribose 1-diphosphate. It catalyses the reaction IMP + diphosphate = hypoxanthine + 5-phospho-alpha-D-ribose 1-diphosphate. It functions in the pathway purine metabolism; GMP biosynthesis via salvage pathway; GMP from guanine: step 1/1. The protein operates within purine metabolism; XMP biosynthesis via salvage pathway; XMP from xanthine: step 1/1. Functionally, purine salvage pathway enzyme that catalyzes the transfer of the ribosyl-5-phosphate group from 5-phospho-alpha-D-ribose 1-diphosphate (PRPP) to the N9 position of the 6-oxopurines guanine and xanthine to form the corresponding ribonucleotides GMP (guanosine 5'-monophosphate) and XMP (xanthosine 5'-monophosphate), with the release of PPi. To a lesser extent, also acts on hypoxanthine. The chain is Xanthine-guanine phosphoribosyltransferase 2 from Haemophilus influenzae (strain 86-028NP).